The following is a 652-amino-acid chain: MKKRIKELTDLLNRYRYDYYTKDAPSVSDSDYDKLYRELVTLEQSYPEYVLQDSPTQQVGGTILKGFEKYRHQYPLFSLQDAFSREELDAFDKRVKAEFPNATYLAELKIDGLSISLSYENGFLQVGATRGDGNIGENITENIKKIKDIPHQLSEPLTITVRGEAYMSRQSFKAINEGRQENGETEFANPRNAAAGTLRQLDTAVVAKRQLATFLYQEVSPTARNQQNEVLAELADLGFSVNPYYQLTSSMDEIWDFIKTIEAKRDQLAYDIDGVVIKVNSLAMQEELGFTVKAPRWAIAYKFPAEEKEAEILSVDWTVGRTGVVTPTANLTPVQLAGTTVSRATLHNVDYIAEKDIRIGDTVIVYKAGDIIPAVLNVVMSKRNQQEVMLIPKLCPSCGSELVHFEDEVALRCINPLCPSLIQRSLEHFASRDAMNITGLGPAIVEKLFLAGFVHDVADIYQLTKEDFMQLDGIKEKSADKLLAAIEASKSNSAEKLLFGLGIRHIGSKVSRLILEVYGDISALLTAKEEEIARIDGLGSTIAQSLTQYFEQKTAAILVDELKTAGVNMHYSGQKVNSDAALFGLTVVLTGKLNQLNRNEAKDKLEALGAKVTGSVSKKTDLVIAGSDAGSKLEKAKSLGIRIEDEDWLRQL.

NAD(+)-binding positions include 29–33, 78–79, and Glu-107; these read DSDYD and SL. The active-site N6-AMP-lysine intermediate is Lys-109. The NAD(+) site is built by Arg-130, Glu-164, Lys-278, and Lys-302. 4 residues coordinate Zn(2+): Cys-395, Cys-398, Cys-413, and Cys-418. Residues 577-652 form the BRCT domain; the sequence is NSDAALFGLT…IEDEDWLRQL (76 aa).

It belongs to the NAD-dependent DNA ligase family. LigA subfamily. Mg(2+) is required as a cofactor. It depends on Mn(2+) as a cofactor.

It catalyses the reaction NAD(+) + (deoxyribonucleotide)n-3'-hydroxyl + 5'-phospho-(deoxyribonucleotide)m = (deoxyribonucleotide)n+m + AMP + beta-nicotinamide D-nucleotide.. In terms of biological role, DNA ligase that catalyzes the formation of phosphodiester linkages between 5'-phosphoryl and 3'-hydroxyl groups in double-stranded DNA using NAD as a coenzyme and as the energy source for the reaction. It is essential for DNA replication and repair of damaged DNA. This chain is DNA ligase, found in Streptococcus pyogenes serotype M3 (strain ATCC BAA-595 / MGAS315).